The following is a 551-amino-acid chain: Cytochrome c oxidase subunit 1 homolog (551 aa).

3 helical membrane-spanning segments follow: residues 14 to 34, 40 to 60, and 88 to 108; these read GELG…VVAA, EYAF…FVIG, and VGTL…VIIA. H132 is a heme b binding site. Helical transmembrane passes span 133–153, 169–189, 202–222, 229–249, 280–300, 313–333, 345–365, and 383–403; these read TSAV…FYVV, FVVL…LLGI, ADLW…GTVL, IYVA…LHLG, GHNA…YYFI, LSIV…PHHL, LGMT…INGL, and MMVV…MMSV. Residues H281, H331, and H332 each coordinate Cu cation. Positions 419 and 421 each coordinate heme b. Transmembrane regions (helical) follow at residues 424 to 444, 459 to 479, and 513 to 533; these read ALGW…PWLW, FWVS…AGIL, and IGGI…FMTI.

It belongs to the heme-copper respiratory oxidase family. It depends on Cu(2+) as a cofactor. The cofactor is heme b.

The protein localises to the cell membrane. It catalyses the reaction 4 Fe(II)-[cytochrome c] + O2 + 8 H(+)(in) = 4 Fe(III)-[cytochrome c] + 2 H2O + 4 H(+)(out). The protein operates within energy metabolism; oxidative phosphorylation. In terms of biological role, cytochrome c oxidase is the component of the respiratory chain that catalyzes the reduction of oxygen to water. Subunits 1-3 form the functional core of the enzyme complex. Co I is the catalytic subunit of the enzyme. Electrons originating in cytochrome c or a quinol are transferred to the bimetallic center formed by a high-spin heme and copper B. This is Cytochrome c oxidase subunit 1 homolog (fixN) from Azorhizobium caulinodans (strain ATCC 43989 / DSM 5975 / JCM 20966 / LMG 6465 / NBRC 14845 / NCIMB 13405 / ORS 571).